Here is a 156-residue protein sequence, read N- to C-terminus: Ribosomal RNA large subunit methyltransferase H (156 aa).

S-adenosyl-L-methionine contacts are provided by residues Leu-72, Gly-104, and 123-128 (LSEMTL).

This sequence belongs to the RNA methyltransferase RlmH family. In terms of assembly, homodimer.

It is found in the cytoplasm. It carries out the reaction pseudouridine(1915) in 23S rRNA + S-adenosyl-L-methionine = N(3)-methylpseudouridine(1915) in 23S rRNA + S-adenosyl-L-homocysteine + H(+). Functionally, specifically methylates the pseudouridine at position 1915 (m3Psi1915) in 23S rRNA. This Syntrophotalea carbinolica (strain DSM 2380 / NBRC 103641 / GraBd1) (Pelobacter carbinolicus) protein is Ribosomal RNA large subunit methyltransferase H.